A 445-amino-acid chain; its full sequence is UPF0210 protein SPT_0285 (445 aa).

It belongs to the UPF0210 family. In terms of assembly, homodimer.

This is UPF0210 protein SPT_0285 from Streptococcus pneumoniae (strain Taiwan19F-14).